We begin with the raw amino-acid sequence, 295 residues long: Pantothenate synthetase (295 aa).

29–36 (MGALHSGH) is an ATP binding site. The Proton donor role is filled by histidine 36. Glutamine 60 contributes to the (R)-pantoate binding site. Glutamine 60 provides a ligand contact to beta-alanine. 158–161 (GQKD) contributes to the ATP binding site. Residue glutamine 164 participates in (R)-pantoate binding. Residues valine 187 and 195–198 (LSSR) each bind ATP.

It belongs to the pantothenate synthetase family. As to quaternary structure, homodimer.

Its subcellular location is the cytoplasm. The catalysed reaction is (R)-pantoate + beta-alanine + ATP = (R)-pantothenate + AMP + diphosphate + H(+). Its pathway is cofactor biosynthesis; (R)-pantothenate biosynthesis; (R)-pantothenate from (R)-pantoate and beta-alanine: step 1/1. Functionally, catalyzes the condensation of pantoate with beta-alanine in an ATP-dependent reaction via a pantoyl-adenylate intermediate. The sequence is that of Pantothenate synthetase from Paenarthrobacter aurescens (strain TC1).